A 188-amino-acid chain; its full sequence is MASSDCEGHAGQEGETFLYFAYGSNLLTERIHLRNPSAVFCCVARLQDFKLDFGNFQGKMSERWHGGIATIFQSPGDEVWGVVWRMNKSNISSLDEQEGVKSGVYVVIEIKVSTREGKEITCRSYLMTNYESAPPSPQYKKVICMGAKENGLPQEYQEKLKAIEPNEYKGKISDEMEDIIKKGESKLS.

19–22 provides a ligand contact to substrate; it reads YFAY. Glu-98 (proton acceptor) is an active-site residue. A Phosphoserine modification is found at Ser-173.

This sequence belongs to the gamma-glutamylcyclotransferase family. As to quaternary structure, homodimer.

It catalyses the reaction an alpha-(gamma-L-glutamyl)-L-amino acid = 5-oxo-L-proline + an L-alpha-amino acid. In terms of biological role, catalyzes the formation of 5-oxoproline from gamma-glutamyl dipeptides and may play a significant role in glutathione homeostasis. Induces release of cytochrome c from mitochondria with resultant induction of apoptosis. The sequence is that of Gamma-glutamylcyclotransferase (Ggct) from Mus musculus (Mouse).